The sequence spans 286 residues: 4-diphosphocytidyl-2-C-methyl-D-erythritol kinase (286 aa).

Lysine 11 is a catalytic residue. Proline 93 to serine 103 serves as a coordination point for ATP. Residue aspartate 135 is part of the active site.

The protein belongs to the GHMP kinase family. IspE subfamily.

The enzyme catalyses 4-CDP-2-C-methyl-D-erythritol + ATP = 4-CDP-2-C-methyl-D-erythritol 2-phosphate + ADP + H(+). Its pathway is isoprenoid biosynthesis; isopentenyl diphosphate biosynthesis via DXP pathway; isopentenyl diphosphate from 1-deoxy-D-xylulose 5-phosphate: step 3/6. In terms of biological role, catalyzes the phosphorylation of the position 2 hydroxy group of 4-diphosphocytidyl-2C-methyl-D-erythritol. The protein is 4-diphosphocytidyl-2-C-methyl-D-erythritol kinase of Chlorobium phaeobacteroides (strain BS1).